A 203-amino-acid chain; its full sequence is Dephospho-CoA kinase (203 aa).

The 199-residue stretch at 5 to 203 folds into the DPCK domain; it reads IVGLTGGIAS…VVYRVAASEH (199 aa). 13-18 contributes to the ATP binding site; that stretch reads ASGKSA.

This sequence belongs to the CoaE family.

Its subcellular location is the cytoplasm. The catalysed reaction is 3'-dephospho-CoA + ATP = ADP + CoA + H(+). Its pathway is cofactor biosynthesis; coenzyme A biosynthesis; CoA from (R)-pantothenate: step 5/5. Catalyzes the phosphorylation of the 3'-hydroxyl group of dephosphocoenzyme A to form coenzyme A. The sequence is that of Dephospho-CoA kinase from Xanthomonas euvesicatoria pv. vesicatoria (strain 85-10) (Xanthomonas campestris pv. vesicatoria).